An 81-amino-acid chain; its full sequence is Photosystem I iron-sulfur center (81 aa).

2 4Fe-4S ferredoxin-type domains span residues 2–31 and 39–68; these read AHAVKIYDTCIGCTQCVRACPTDVLEMIPW and IASAPRTEDCVGCKRCESRCPTDFLSVRVY. Residues C11, C14, C17, C21, C48, C51, C54, and C58 each contribute to the [4Fe-4S] cluster site.

The eukaryotic PSI reaction center is composed of at least 11 subunits. It depends on [4Fe-4S] cluster as a cofactor.

Its subcellular location is the plastid. The protein localises to the chloroplast thylakoid membrane. It catalyses the reaction reduced [plastocyanin] + hnu + oxidized [2Fe-2S]-[ferredoxin] = oxidized [plastocyanin] + reduced [2Fe-2S]-[ferredoxin]. Its function is as follows. Apoprotein for the two 4Fe-4S centers FA and FB of photosystem I (PSI); essential for photochemical activity. FB is the terminal electron acceptor of PSI, donating electrons to ferredoxin. The C-terminus interacts with PsaA/B/D and helps assemble the protein into the PSI complex. Required for binding of PsaD and PsaE to PSI. PSI is a plastocyanin-ferredoxin oxidoreductase, converting photonic excitation into a charge separation, which transfers an electron from the donor P700 chlorophyll pair to the spectroscopically characterized acceptors A0, A1, FX, FA and FB in turn. This Marchantia polymorpha (Common liverwort) protein is Photosystem I iron-sulfur center.